The chain runs to 321 residues: MTRPPLVRGIFSLGLSVAVLKGVEKTVRKHLERQGWIEPQKVDYELIFTIDRLKNLVDNKREALTAEQPDAGELSWRKVFNFISRQSSELDTRIYVLILLLSFLLPIAWTVLDGDRETTLEDKDNDCNVDLIENERRLKHYNDGERAVLQFGKNRSEPIILSYKDMNVLEGEHEFTSKEEHSNSHLTSKSENALNQVGSEDLLGCHLEKQLEEDKNEPNGEADGEDDNNREKDCSSSSEVESQSKCRKESTAEPDSLSRDTRTTSSLKSSTSFPISFKGSIDLKSLNQPSSLLHIQVSPTKSSNLDAQVNTEQAYSQPFRY.

The N-terminal stretch at 1–22 is a signal peptide; sequence MTRPPLVRGIFSLGLSVAVLKG. The segment at 73-125 is TSC13-binding; sequence ELSWRKVFNFISRQSSELDTRIYVLILLLSFLLPIAWTVLDGDRETTLEDKDN. A helical membrane pass occupies residues 94-114; it reads IYVLILLLSFLLPIAWTVLDG. Residues 139–195 form an OSH1-binding region; that stretch reads KHYNDGERAVLQFGKNRSEPIILSYKDMNVLEGEHEFTSKEEHSNSHLTSKSENALN. Phosphoserine is present on residues Ser156 and Ser199. The tract at residues 211–275 is disordered; that stretch reads LEEDKNEPNG…SLKSSTSFPI (65 aa). Residues 233–321 are VAC8-binding; that stretch reads DCSSSSEVES…EQAYSQPFRY (89 aa). Positions 242-262 are enriched in basic and acidic residues; the sequence is SQSKCRKESTAEPDSLSRDTR. Low complexity predominate over residues 263-272; sequence TTSSLKSSTS. 2 positions are modified to phosphoserine: Ser285 and Ser298. The disordered stretch occupies residues 299 to 321; that stretch reads PTKSSNLDAQVNTEQAYSQPFRY.

Interacts with OSH1, TSC13 and VAC8.

The protein localises to the nucleus outer membrane. Involved in the formation of nucleus-vacuole junctions (NVJs) during piecemeal microautophagy of the nucleus (PMN). NVJs are interorganelle interfaces mediated by NVJ1 in the nuclear envelope and VAC8 on the vacuole membrane. Together, NVJ1 and VAC8 form Velcro-like patches through which teardrop-like portions of the nucleus are pinched off into the vacuolar lumen and degraded by the PMN process. Also acts as an outer-nuclear membrane receptor for OSH1 and TSC13. This chain is Nucleus-vacuole junction protein 1 (NVJ1), found in Saccharomyces cerevisiae (strain ATCC 204508 / S288c) (Baker's yeast).